We begin with the raw amino-acid sequence, 63 residues long: Race-specific elicitor A9 (63 aa).

An N-terminal signal peptide occupies residues 1-23; it reads MKLSLLSVELALLIATTLPLCWA. A propeptide spanning residues 24 to 35 is cleaved from the precursor; that stretch reads AALPVGLGVGLD. 3 disulfides stabilise this stretch: Cys-37/Cys-51, Cys-41/Cys-54, and Cys-47/Cys-61.

This necrosis-inducing peptide induces a hypersensitive response on Cf-9 tomato genotypes. Race-specific elicitors are compounds which only induce defense responses in genotypes of host plants which are resistant to the pathogenic race that produces the elicitor, but not in susceptible genotypes. In Passalora fulva (Tomato leaf mold), this protein is Race-specific elicitor A9 (AVR9).